Here is a 1243-residue protein sequence, read N- to C-terminus: Tau-tubulin kinase 2 (1243 aa).

The Protein kinase domain maps to 21–284; that stretch reads WKVLRKIGGG…LLTSVFDNSI (264 aa). ATP is bound by residues 27 to 35 and Lys50; that span reads IGGGGFGEI. Catalysis depends on Asp141, which acts as the Proton acceptor. Ser445 is modified (phosphoserine). A compositionally biased stretch (polar residues) spans 674-683; the sequence is VASTQSTSGS. Disordered stretches follow at residues 674 to 695 and 737 to 761; these read VASTQSTSGSFHYGPQPEKKDL and TGHDMLPNMRDGDTSQDLGPKDPPD. The residue at position 786 (Ser786) is a Phosphoserine. The disordered stretch occupies residues 1063–1086; that stretch reads QINGSASPQFLPRPPPGKPPVRPG. Residues 1073–1084 show a composition bias toward pro residues; it reads LPRPPPGKPPVR. Ser1102 bears the Phosphoserine mark. Over residues 1115-1129 the composition is skewed to polar residues; that stretch reads QNGSQKSRSTTQCKS. Residues 1115–1243 form a disordered region; that stretch reads QNGSQKSRST…KSKPASKLSR (129 aa). Composition is skewed to low complexity over residues 1144 to 1170, 1187 to 1202, and 1227 to 1243; these read VVPRRSPSASPRSSSLPRTSSSSPSRA, SKSPPSHSGSSSSRRS, and SSKTPPGKSKPASKLSR.

It belongs to the protein kinase superfamily. CK1 Ser/Thr protein kinase family. Interacts with CEP164. Interacts with MCRS1; the interaction is required for recruitment of TTBK2 to the mother centriole.

The protein resides in the cell projection. Its subcellular location is the cilium. The protein localises to the cytoplasm. It localises to the cytoskeleton. It is found in the cilium basal body. The protein resides in the microtubule organizing center. Its subcellular location is the centrosome. The protein localises to the centriole. It localises to the cytosol. It is found in the nucleus. It catalyses the reaction L-seryl-[protein] + ATP = O-phospho-L-seryl-[protein] + ADP + H(+). It carries out the reaction L-threonyl-[protein] + ATP = O-phospho-L-threonyl-[protein] + ADP + H(+). Serine/threonine kinase that acts as a key regulator of ciliogenesis: controls the initiation of ciliogenesis by binding to the distal end of the basal body and promoting the removal of CCP110, which caps the mother centriole, leading to the recruitment of IFT proteins, which build the ciliary axoneme. Has some substrate preference for proteins that are already phosphorylated on a Tyr residue at the +2 position relative to the phosphorylation site. Able to phosphorylate tau on serines in vitro. Phosphorylates MPHOSPH9 which promotes its ubiquitination and proteasomal degradation, loss of MPHOSPH9 facilitates the removal of the CP110-CEP97 complex (a negative regulator of ciliogenesis) from the mother centrioles, promoting the initiation of ciliogenesis. Required for recruitment of CPLANE2 and INTU to the mother centriole. This is Tau-tubulin kinase 2 (Ttbk2) from Mus musculus (Mouse).